A 308-amino-acid chain; its full sequence is Urease accessory protein UreD (308 aa).

Belongs to the UreD family. UreD, UreF and UreG form a complex that acts as a GTP-hydrolysis-dependent molecular chaperone, activating the urease apoprotein by helping to assemble the nickel containing metallocenter of UreC. The UreE protein probably delivers the nickel.

It is found in the cytoplasm. Functionally, required for maturation of urease via the functional incorporation of the urease nickel metallocenter. The polypeptide is Urease accessory protein UreD (Psychromonas ingrahamii (strain DSM 17664 / CCUG 51855 / 37)).